A 215-amino-acid chain; its full sequence is Variable small protein 2 (215 aa).

The N-terminal stretch at 1-18 (MRKRISAIIMTLFMVFMS) is a signal peptide. The N-palmitoyl cysteine moiety is linked to residue C19. A lipid anchor (S-diacylglycerol cysteine) is attached at C19.

Belongs to the variable small protein (Vsp) family.

The protein localises to the cell outer membrane. Functionally, the Vlp and Vsp proteins are antigenically distinct proteins, only one vlp or vsp gene is transcriptionally active at any one time. Switching between these genes is a mechanism of host immune response evasion. The protein is Variable small protein 2 of Borrelia hermsii.